Here is a 278-residue protein sequence, read N- to C-terminus: 4-deoxy-L-threo-5-hexosulose-uronate ketol-isomerase (278 aa).

Positions 196, 198, 203, and 245 each coordinate Zn(2+).

It belongs to the KduI family. Zn(2+) is required as a cofactor.

It catalyses the reaction 5-dehydro-4-deoxy-D-glucuronate = 3-deoxy-D-glycero-2,5-hexodiulosonate. It functions in the pathway glycan metabolism; pectin degradation; 2-dehydro-3-deoxy-D-gluconate from pectin: step 4/5. Its function is as follows. Catalyzes the isomerization of 5-dehydro-4-deoxy-D-glucuronate to 3-deoxy-D-glycero-2,5-hexodiulosonate. This Shigella boydii serotype 4 (strain Sb227) protein is 4-deoxy-L-threo-5-hexosulose-uronate ketol-isomerase.